The following is a 244-amino-acid chain: Krueppel-like factor 9 (244 aa).

The segment at 80–142 is disordered; the sequence is SVCSDSLESP…AKGKHASEKR (63 aa). The residue at position 122 (Ser-122) is a Phosphoserine. C2H2-type zinc fingers lie at residues 143 to 167, 173 to 197, and 203 to 225; these read HKCP…YRVH, FPCT…YRTH, and FRCP…ARRH.

It belongs to the Sp1 C2H2-type zinc-finger protein family. In terms of assembly, interacts with ZZEF1. Epidermis (at protein level).

The protein localises to the nucleus. In terms of biological role, transcription factor that binds to GC box promoter elements. Selectively activates mRNA synthesis from genes containing tandem repeats of GC boxes but represses genes with a single GC box. Acts as an epidermal circadian transcription factor regulating keratinocyte proliferation. In Homo sapiens (Human), this protein is Krueppel-like factor 9 (KLF9).